Consider the following 658-residue polypeptide: Carnitine O-palmitoyltransferase 2, mitochondrial (658 aa).

Residues 1 to 25 (MMPRLLLRDWPRCPSLVLGAPSRPL) constitute a mitochondrion transit peptide. Residues 26-178 (SAVSGPAEYL…GLLEPEVFHL (153 aa)) are Mitochondrial matrix-facing. At Lys-69 the chain carries N6-succinyllysine. At Lys-79 the chain carries N6-acetyllysine. The residue at position 85 (Lys-85) is an N6-succinyllysine. The note=Mitochondrial inner membrane intramembrane region spans 179–208 (NPARSDTDAFKRLIRFVPSSLSWYGAYLVN). Topologically, residues 209–658 (AYPLDMSQYF…DALEGKAIKT (450 aa)) are mitochondrial matrix. Position 239 is an N6-acetyllysine; alternate (Lys-239). At Lys-239 the chain carries N6-succinyllysine; alternate. Lys-305 carries the N6-acetyllysine modification. The active-site Proton acceptor is His-372. Lys-418 carries the N6-acetyllysine; alternate modification. Lys-418 is modified (N6-succinyllysine; alternate). Residues Lys-424 and Lys-439 each carry the N6-succinyllysine modification. 452–464 (GKEFLKKKKLSPD) lines the CoA pocket. Tyr-486, Ser-488, and Thr-499 together coordinate (R)-carnitine. An N6-acetyllysine; alternate mark is found at Lys-510 and Lys-544. Residues Lys-510 and Lys-544 each carry the N6-succinyllysine; alternate modification.

It belongs to the carnitine/choline acetyltransferase family.

The protein resides in the mitochondrion inner membrane. It carries out the reaction (R)-carnitine + hexadecanoyl-CoA = O-hexadecanoyl-(R)-carnitine + CoA. It catalyses the reaction octanoyl-CoA + (R)-carnitine = O-octanoyl-(R)-carnitine + CoA. The enzyme catalyses decanoyl-CoA + (R)-carnitine = O-decanoyl-(R)-carnitine + CoA. The catalysed reaction is dodecanoyl-CoA + (R)-carnitine = O-dodecanoyl-R-carnitine + CoA. It carries out the reaction tetradecanoyl-CoA + (R)-carnitine = O-tetradecanoyl-(R)-carnitine + CoA. It catalyses the reaction (R)-carnitine + octadecanoyl-CoA = O-octadecanoyl-(R)-carnitine + CoA. The enzyme catalyses eicosanoyl-CoA + (R)-carnitine = O-eicosanoyl-(R)-carnitine + CoA. The catalysed reaction is (9Z)-tetradecenoyl-CoA + (R)-carnitine = O-(9Z)-tetradecenoyl-(R)-carnitine + CoA. It carries out the reaction (5Z)-tetradecenoyl-CoA + (R)-carnitine = O-(5Z)-tetradecenoyl-(R)-carnitine + CoA. It catalyses the reaction (R)-carnitine + (9Z)-octadecenoyl-CoA = O-(9Z)-octadecenoyl-(R)-carnitine + CoA. The enzyme catalyses 4,8-dimethylnonanoyl-CoA + (R)-carnitine = O-4,8-dimethylnonanoyl-(R)-carnitine + CoA. The protein operates within lipid metabolism; fatty acid beta-oxidation. In terms of biological role, involved in the intramitochondrial synthesis of acylcarnitines from accumulated acyl-CoA metabolites. Reconverts acylcarnitines back into the respective acyl-CoA esters that can then undergo beta-oxidation, an essential step for the mitochondrial uptake of long-chain fatty acids and their subsequent beta-oxidation in the mitochondrion. Active with medium (C8-C12) and long-chain (C14-C18) acyl-CoA esters. The polypeptide is Carnitine O-palmitoyltransferase 2, mitochondrial (Mus musculus (Mouse)).